Here is a 708-residue protein sequence, read N- to C-terminus: Retrotransposon-derived protein PEG10 (708 aa).

Residues 1–50 are a coiled coil; the sequence is MTERRRDELSEEINNLREKVMKQSEENNNLQSQVQKLTEENTTLREQVEP. The interval 21–74 is disordered; it reads MKQSEENNNLQSQVQKLTEENTTLREQVEPTPEDEDDDIELRGAAAAAAPPPPI. The segment covering 26 to 36 has biased composition (polar residues); the sequence is ENNNLQSQVQK. Basic and acidic residues predominate over residues 37–48; the sequence is LTEENTTLREQV. The segment at 76–275 is necessary for interaction with ACVRL1; the sequence is EECPEDLPEK…HQVDPTEPVG (200 aa). Residues 293-310 form a CCHC-type zinc finger; the sequence is NLCLYCGTGGHYADNCPA. Residues 310–344 form a disordered region; the sequence is AKASKSSPAGKLPGPAVEGPSATGPEIIRSPQDDA. Glycyl lysine isopeptide (Lys-Gly) (interchain with G-Cter in ubiquitin) cross-links involve residues lysine 311 and lysine 314. Residues serine 316 and leucine 321 each carry the phosphoserine modification. Arginine 507, arginine 598, and arginine 611 each carry omega-N-methylarginine. The disordered stretch occupies residues 683–708; that stretch reads PVPQYPPPQPPPPPPPPPPPPSYSTL.

Homooligomer; homooligomerizes into virion-like capsids. Interacts with ACVRL1. Interacts with SIAH1 and SIAH2. Post-translationally, undergoes proteolytic cleavage. As to expression, expressed in the cytotrophoblast layer but not in the overlying syncytiotrophoblast of the placenta. Expressed in prostate and breast carcinomas but not in normal breast and prostate epithelial cells. Expressed in the Hep-G2 cell line (at protein level). Expressed in brain, liver, spleen, kidney, thymus, lung, ovary, testis, reactive lymph node, skeletal muscle, adipose tissue and placenta. Expressed in pancreatic and hepatocellular carcinomas (HCC).

It is found in the extracellular vesicle membrane. The protein localises to the cytoplasm. Its subcellular location is the nucleus. In terms of biological role, retrotransposon-derived protein that binds its own mRNA and self-assembles into virion-like capsids. Forms virion-like extracellular vesicles that encapsulate their own mRNA and are released from cells, enabling intercellular transfer of PEG10 mRNA. Binds its own mRNA in the 5'-UTR region, in the region near the boundary between the nucleocapsid (NC) and protease (PRO) coding sequences and in the beginning of the 3'-UTR region. Involved in placenta formation: required for trophoblast stem cells differentiation. Involved at the immediate early stage of adipocyte differentiation. Overexpressed in many cancers and enhances tumor progression: promotes cell proliferation by driving cell cycle progression from G0/G1. Enhances cancer progression by inhibiting the TGF-beta signaling, possibly via interaction with the TGF-beta receptor ACVRL1. May bind to the 5'-GCCTGTCTTT-3' DNA sequence of the MB1 domain in the myelin basic protein (MBP) promoter; additional evidences are however required to confirm this result. The polypeptide is Retrotransposon-derived protein PEG10 (Homo sapiens (Human)).